Consider the following 289-residue polypeptide: Nitrogenase iron protein (289 aa).

Position 8–15 (8–15 (GKGGIGKS)) interacts with ATP. A [4Fe-4S] cluster-binding site is contributed by C96. At R99 the chain carries ADP-ribosylarginine; by dinitrogenase reductase ADP-ribosyltransferase. Residue C130 participates in [4Fe-4S] cluster binding.

This sequence belongs to the NifH/BchL/ChlL family. In terms of assembly, homodimer. [4Fe-4S] cluster serves as cofactor. The reversible ADP-ribosylation of Arg-99 inactivates the nitrogenase reductase and regulates nitrogenase activity.

It catalyses the reaction N2 + 8 reduced [2Fe-2S]-[ferredoxin] + 16 ATP + 16 H2O = H2 + 8 oxidized [2Fe-2S]-[ferredoxin] + 2 NH4(+) + 16 ADP + 16 phosphate + 6 H(+). The key enzymatic reactions in nitrogen fixation are catalyzed by the nitrogenase complex, which has 2 components: the iron protein and the molybdenum-iron protein. This chain is Nitrogenase iron protein, found in Parafrankia sp. (strain EAN1pec).